A 187-amino-acid polypeptide reads, in one-letter code: Elongation factor P (187 aa).

Belongs to the elongation factor P family.

Its subcellular location is the cytoplasm. It participates in protein biosynthesis; polypeptide chain elongation. In terms of biological role, involved in peptide bond synthesis. Stimulates efficient translation and peptide-bond synthesis on native or reconstituted 70S ribosomes in vitro. Probably functions indirectly by altering the affinity of the ribosome for aminoacyl-tRNA, thus increasing their reactivity as acceptors for peptidyl transferase. This chain is Elongation factor P, found in Ruegeria pomeroyi (strain ATCC 700808 / DSM 15171 / DSS-3) (Silicibacter pomeroyi).